Consider the following 241-residue polypeptide: Glycerol-3-phosphate acyltransferase (241 aa).

6 consecutive transmembrane segments (helical) span residues 3–23 (ILYS…LLGS), 63–83 (IVFA…SAIV), 97–117 (YISP…PAYY), 131–151 (LIIS…LLVV), 156–176 (IVSL…WMPW), and 198–218 (LVNY…LVLV).

Belongs to the PlsY family. Probably interacts with PlsX.

It localises to the cell membrane. It catalyses the reaction an acyl phosphate + sn-glycerol 3-phosphate = a 1-acyl-sn-glycero-3-phosphate + phosphate. The protein operates within lipid metabolism; phospholipid metabolism. Functionally, catalyzes the transfer of an acyl group from acyl-phosphate (acyl-PO(4)) to glycerol-3-phosphate (G3P) to form lysophosphatidic acid (LPA). This enzyme utilizes acyl-phosphate as fatty acyl donor, but not acyl-CoA or acyl-ACP. This Mycoplasmopsis agalactiae (strain NCTC 10123 / CIP 59.7 / PG2) (Mycoplasma agalactiae) protein is Glycerol-3-phosphate acyltransferase.